A 361-amino-acid chain; its full sequence is Holliday junction branch migration complex subunit RuvB (361 aa).

Residues 1–12 (MNWDETGPETDE) show a composition bias toward acidic residues. Residues 1–21 (MNWDETGPETDEPTGPVLDDR) form a disordered region. The segment at 13–199 (PTGPVLDDRL…FGFTGHMEFY (187 aa)) is large ATPase domain (RuvB-L). ATP is bound by residues Leu-38, Arg-39, Gly-80, Lys-83, Thr-84, Thr-85, 146–148 (EDF), Arg-189, Tyr-199, and Arg-236. Position 84 (Thr-84) interacts with Mg(2+). The tract at residues 200–270 (APAELERVLH…IAMAALKVYE (71 aa)) is small ATPAse domain (RuvB-S). The segment at 273–361 (ARGLDRLDRA…AKGQQGLFGA (89 aa)) is head domain (RuvB-H). DNA is bound by residues Arg-309, Arg-328, and Arg-333.

It belongs to the RuvB family. Homohexamer. Forms an RuvA(8)-RuvB(12)-Holliday junction (HJ) complex. HJ DNA is sandwiched between 2 RuvA tetramers; dsDNA enters through RuvA and exits via RuvB. An RuvB hexamer assembles on each DNA strand where it exits the tetramer. Each RuvB hexamer is contacted by two RuvA subunits (via domain III) on 2 adjacent RuvB subunits; this complex drives branch migration. In the full resolvosome a probable DNA-RuvA(4)-RuvB(12)-RuvC(2) complex forms which resolves the HJ.

It localises to the cytoplasm. It catalyses the reaction ATP + H2O = ADP + phosphate + H(+). Its function is as follows. The RuvA-RuvB-RuvC complex processes Holliday junction (HJ) DNA during genetic recombination and DNA repair, while the RuvA-RuvB complex plays an important role in the rescue of blocked DNA replication forks via replication fork reversal (RFR). RuvA specifically binds to HJ cruciform DNA, conferring on it an open structure. The RuvB hexamer acts as an ATP-dependent pump, pulling dsDNA into and through the RuvAB complex. RuvB forms 2 homohexamers on either side of HJ DNA bound by 1 or 2 RuvA tetramers; 4 subunits per hexamer contact DNA at a time. Coordinated motions by a converter formed by DNA-disengaged RuvB subunits stimulates ATP hydrolysis and nucleotide exchange. Immobilization of the converter enables RuvB to convert the ATP-contained energy into a lever motion, pulling 2 nucleotides of DNA out of the RuvA tetramer per ATP hydrolyzed, thus driving DNA branch migration. The RuvB motors rotate together with the DNA substrate, which together with the progressing nucleotide cycle form the mechanistic basis for DNA recombination by continuous HJ branch migration. Branch migration allows RuvC to scan DNA until it finds its consensus sequence, where it cleaves and resolves cruciform DNA. In Streptomyces griseus subsp. griseus (strain JCM 4626 / CBS 651.72 / NBRC 13350 / KCC S-0626 / ISP 5235), this protein is Holliday junction branch migration complex subunit RuvB.